The sequence spans 506 residues: 2,3-bisphosphoglycerate-independent phosphoglycerate mutase (506 aa).

Residues D13 and S63 each contribute to the Mn(2+) site. Catalysis depends on S63, which acts as the Phosphoserine intermediate. Residues H124, 153 to 154 (RD), R183, R189, 255 to 258 (RADR), and K331 each bind substrate. Mn(2+) contacts are provided by D397, H401, D438, H439, and H457.

The protein belongs to the BPG-independent phosphoglycerate mutase family. As to quaternary structure, monomer. The cofactor is Mn(2+).

The enzyme catalyses (2R)-2-phosphoglycerate = (2R)-3-phosphoglycerate. Its pathway is carbohydrate degradation; glycolysis; pyruvate from D-glyceraldehyde 3-phosphate: step 3/5. Its function is as follows. Catalyzes the interconversion of 2-phosphoglycerate and 3-phosphoglycerate. The protein is 2,3-bisphosphoglycerate-independent phosphoglycerate mutase of Ruegeria sp. (strain TM1040) (Silicibacter sp.).